The primary structure comprises 159 residues: Biogenesis of lysosome-related organelles complex 1 subunit 2 (159 aa).

The interval 1-37 (MDKPTTSAAAAAAQDSNLLPDSPQHGPTLSSASSFEA) is disordered. Over residues 14–36 (QDSNLLPDSPQHGPTLSSASSFE) the composition is skewed to polar residues. Residues 69-134 (EDYKLLEEMN…KLEAAAYKLD (66 aa)) adopt a coiled-coil conformation.

This sequence belongs to the BLOC1S2 family. In terms of assembly, homodimer. Component of the biogenesis of lysosome-related organelles complex-1 (BLOC-1) composed of Blos1, Blos2, Blos3, Blos4, Dysb, Muted, Pldn and Snapin. Interacts with Snapin.

Functionally, component of the biogenesis of lysosome-related organelles complex-1 (BLOC-1) involved in pigment granule biogenesis. In Drosophila melanogaster (Fruit fly), this protein is Biogenesis of lysosome-related organelles complex 1 subunit 2.